Consider the following 61-residue polypeptide: Small ribosomal subunit protein uS14 (61 aa).

Zn(2+)-binding residues include C24, C27, C40, and C43.

This sequence belongs to the universal ribosomal protein uS14 family. Zinc-binding uS14 subfamily. Part of the 30S ribosomal subunit. Contacts proteins S3 and S10. It depends on Zn(2+) as a cofactor.

Binds 16S rRNA, required for the assembly of 30S particles and may also be responsible for determining the conformation of the 16S rRNA at the A site. The sequence is that of Small ribosomal subunit protein uS14 from Clostridium botulinum (strain Alaska E43 / Type E3).